The primary structure comprises 218 residues: Tegument protein UL51 homolog (218 aa).

Cys-11 carries S-palmitoyl cysteine; by host lipidation. A disordered region spans residues Ala-199–Thr-218.

The protein belongs to the herpesviridae UL51 family. As to quaternary structure, homodimer. Interacts with BBRF2; the BBRF2-BSRF1 complexes oligomerize which might play a role in tethering the viral nucleocapsids to the host Golgi membrane during secondary envelopment. Interacts with BGLF3.5. Interacts with BALF1. Interacts with glycoprotein gB. Interacts with glycoprotein heterodimer gH/gL. Phosphorylated. In terms of processing, palmitoylation is necessary for Golgi localization.

It is found in the host cytoplasm. The protein localises to the virion. Its subcellular location is the host Golgi apparatus. Plays several roles during the time course of infection, including egress of virus particles from the perinuclear space and secondary envelopment of cytoplasmic capsids that bud into specific trans-Golgi network (TGN)-derived membranes. This Homo sapiens (Human) protein is Tegument protein UL51 homolog.